A 203-amino-acid polypeptide reads, in one-letter code: dITP/XTP pyrophosphatase (203 aa).

8–13 (TANKGK) provides a ligand contact to substrate. Mg(2+) contacts are provided by Glu41 and Asp70. Residue Asp70 is the Proton acceptor of the active site. Residues Ser71, 153-156 (FGYD), Lys176, and 181-182 (HR) each bind substrate.

This sequence belongs to the HAM1 NTPase family. Homodimer. The cofactor is Mg(2+).

The enzyme catalyses XTP + H2O = XMP + diphosphate + H(+). It carries out the reaction dITP + H2O = dIMP + diphosphate + H(+). The catalysed reaction is ITP + H2O = IMP + diphosphate + H(+). Functionally, pyrophosphatase that catalyzes the hydrolysis of nucleoside triphosphates to their monophosphate derivatives, with a high preference for the non-canonical purine nucleotides XTP (xanthosine triphosphate), dITP (deoxyinosine triphosphate) and ITP. Seems to function as a house-cleaning enzyme that removes non-canonical purine nucleotides from the nucleotide pool, thus preventing their incorporation into DNA/RNA and avoiding chromosomal lesions. This is dITP/XTP pyrophosphatase from Listeria innocua serovar 6a (strain ATCC BAA-680 / CLIP 11262).